The chain runs to 148 residues: Single-stranded DNA-binding protein, mitochondrial (148 aa).

The N-terminal 16 residues, 1–16, are a transit peptide targeting the mitochondrion; the sequence is MFRRPVLQVLRQFVRH. In terms of domain architecture, SSB spans 30–141; that stretch reads LNRVHLLGRV…IIADNIIFLS (112 aa). Residues Ser-67 and Ser-79 each carry the phosphoserine modification. Lys-113 carries the post-translational modification N6-acetyllysine. Position 122 is an N6-succinyllysine (Lys-122).

In terms of assembly, homotetramer. Interacts with MPG/AAG, through inhibition of its glycosylase activity it potentially prevents formation of DNA breaks in ssDNA, ensuring that base removal primarily occurs in dsDNA. Interacts with POLDIP2. Interacts with PRIMPOL.

The protein resides in the mitochondrion. Its subcellular location is the mitochondrion matrix. It localises to the mitochondrion nucleoid. Binds preferentially and cooperatively to pyrimidine rich single-stranded DNA (ss-DNA). In vitro, required to maintain the copy number of mitochondrial DNA (mtDNA) and plays a crucial role during mtDNA replication by stimulating the activity of the replisome components POLG and TWNK at the replication fork. Promotes the activity of the gamma complex polymerase POLG, largely by organizing the template DNA and eliminating secondary structures to favor ss-DNA conformations that facilitate POLG activity. In addition it is able to promote the 5'-3' unwinding activity of the mtDNA helicase TWNK. May also function in mtDNA repair. The polypeptide is Single-stranded DNA-binding protein, mitochondrial (SSBP1) (Pongo abelii (Sumatran orangutan)).